The chain runs to 266 residues: F-actin-capping protein subunit beta (266 aa).

This sequence belongs to the F-actin-capping protein beta subunit family. In terms of assembly, component of the F-actin capping complex, composed of a heterodimer of an alpha and a beta subunit.

It is found in the cytoplasm. The protein localises to the cytoskeleton. The protein resides in the actin patch. Functionally, F-actin-capping proteins bind in a Ca(2+)-independent manner to the fast growing ends of actin filaments (barbed end) thereby blocking the exchange of subunits at these ends. Unlike other capping proteins (such as gelsolin and severin), these proteins do not sever actin filaments. The sequence is that of F-actin-capping protein subunit beta (cap2) from Emericella nidulans (strain FGSC A4 / ATCC 38163 / CBS 112.46 / NRRL 194 / M139) (Aspergillus nidulans).